The following is a 252-amino-acid chain: 3-deoxy-manno-octulosonate cytidylyltransferase (252 aa).

Belongs to the KdsB family.

Its subcellular location is the cytoplasm. It carries out the reaction 3-deoxy-alpha-D-manno-oct-2-ulosonate + CTP = CMP-3-deoxy-beta-D-manno-octulosonate + diphosphate. It functions in the pathway nucleotide-sugar biosynthesis; CMP-3-deoxy-D-manno-octulosonate biosynthesis; CMP-3-deoxy-D-manno-octulosonate from 3-deoxy-D-manno-octulosonate and CTP: step 1/1. Its pathway is bacterial outer membrane biogenesis; lipopolysaccharide biosynthesis. Its function is as follows. Activates KDO (a required 8-carbon sugar) for incorporation into bacterial lipopolysaccharide in Gram-negative bacteria. The protein is 3-deoxy-manno-octulosonate cytidylyltransferase of Rhodospirillum rubrum (strain ATCC 11170 / ATH 1.1.1 / DSM 467 / LMG 4362 / NCIMB 8255 / S1).